Here is a 630-residue protein sequence, read N- to C-terminus: tRNA uridine 5-carboxymethylaminomethyl modification enzyme MnmG (630 aa).

Position 13 to 18 (13 to 18) interacts with FAD; that stretch reads GGGHAG. 273–287 contributes to the NAD(+) binding site; that stretch reads GPRYCPSIEDKVNRF.

It belongs to the MnmG family. In terms of assembly, homodimer. Heterotetramer of two MnmE and two MnmG subunits. FAD is required as a cofactor.

It is found in the cytoplasm. Its function is as follows. NAD-binding protein involved in the addition of a carboxymethylaminomethyl (cmnm) group at the wobble position (U34) of certain tRNAs, forming tRNA-cmnm(5)s(2)U34. This is tRNA uridine 5-carboxymethylaminomethyl modification enzyme MnmG from Teredinibacter turnerae (strain ATCC 39867 / T7901).